The chain runs to 458 residues: uncharacterized protein (458 aa).

This is an uncharacterized protein from Bacillus subtilis (strain 168).